The following is a 305-amino-acid chain: MAREDSVKCLRCLLYALNLLFWLMSISVLAVSAWMRDYLNNVLTLTAETRVEEAVILTYFPVVHPVMIAVCCFLIIVGMLGYCGTVKRNLLLLAWYFGTLLVIFCVELACGVWTYEQEVMVPVQWSDMVTLKARMTNYGLPRYRWLTHAWNYFQREFKCCGVVYFTDWLEMTEMDWPPDSCCVREFPGCSKQAHQEDLSDLYQEGCGKKMYSFLRGTKQLQVLRFLGISIGVTQILAMILTITLLWALYYDRREPGTDQMLSLKNDASQHLSCHSVELLKPSLSRIFEHTSMANSFNTHFEMEEL.

Residues 1 to 12 (MAREDSVKCLRC) are Cytoplasmic-facing. S-palmitoyl cysteine attachment occurs at residues Cys-9 and Cys-12. The helical transmembrane segment at 13–33 (LLYALNLLFWLMSISVLAVSA) threads the bilayer. The Extracellular segment spans residues 34–59 (WMRDYLNNVLTLTAETRVEEAVILTY). Residues 60–80 (FPVVHPVMIAVCCFLIIVGML) traverse the membrane as a helical segment. Cys-83 carries the S-palmitoyl cysteine lipid modification. A helical transmembrane segment spans residues 90 to 110 (LLLLAWYFGTLLVIFCVELAC). The Extracellular portion of the chain corresponds to 111–224 (GVWTYEQEVM…RGTKQLQVLR (114 aa)). A helical transmembrane segment spans residues 225-245 (FLGISIGVTQILAMILTITLL). Over 246–305 (WALYYDRREPGTDQMLSLKNDASQHLSCHSVELLKPSLSRIFEHTSMANSFNTHFEMEEL) the chain is Cytoplasmic.

This sequence belongs to the tetraspanin (TM4SF) family. In terms of assembly, component of a complex, at least composed of TSPAN12, FZD4 and norrin (NDP). Interacts (when palmitoylated) with ADAM10. Interacts with MMP14/MT1-MMP. Palmitoylated; required for interaction with ADAM10. The precise position of palmitoylated residues is unclear and occurs either on Cys-9, Cys-12 and/or Cys-83.

Its subcellular location is the cell membrane. Functionally, regulator of cell surface receptor signal transduction. Plays a central role in retinal vascularization by regulating norrin (NDP) signal transduction. Acts in concert with norrin (NDP) to promote FZD4 multimerization and subsequent activation of FZD4, leading to promote accumulation of beta-catenin (CTNNB1) and stimulate LEF/TCF-mediated transcriptional programs. Suprisingly, it only activates the norrin (NDP)-dependent activation of FZD4, while it does not activate the Wnt-dependent activation of FZD4, suggesting the existence of a Wnt-independent signaling that also promote accumulation the beta-catenin (CTNNB1). Acts as a regulator of membrane proteinases such as ADAM10 and MMP14/MT1-MMP. Activates ADAM10-dependent cleavage activity of amyloid precursor protein (APP). Activates MMP14/MT1-MMP-dependent cleavage activity. The protein is Tetraspanin-12 (Tspan12) of Rattus norvegicus (Rat).